Here is a 261-residue protein sequence, read N- to C-terminus: Cytochrome c oxidase subunit 3 (261 aa).

The Mitochondrial matrix segment spans residues Met-1–Pro-15. Residues Trp-16–Trp-34 form a helical membrane-spanning segment. Topologically, residues Phe-35–Val-40 are mitochondrial intermembrane. The chain crosses the membrane as a helical span at residues Ala-41 to Thr-66. Topologically, residues Phe-67 to Thr-72 are mitochondrial matrix. A helical transmembrane segment spans residues Pro-73–Ser-105. The Mitochondrial intermembrane portion of the chain corresponds to Leu-106–Glu-128. Residues Val-129–Met-152 form a helical membrane-spanning segment. Residues Glu-153–Asn-155 lie on the Mitochondrial matrix side of the membrane. A helical transmembrane segment spans residues Arg-156–Glu-183. Residues Ala-184–Asp-190 lie on the Mitochondrial intermembrane side of the membrane. The chain crosses the membrane as a helical span at residues Gly-191–Leu-223. The Mitochondrial matrix portion of the chain corresponds to Lys-224–His-232. The chain crosses the membrane as a helical span at residues Phe-233–Ile-256. Residues Tyr-257–Ser-261 lie on the Mitochondrial intermembrane side of the membrane.

This sequence belongs to the cytochrome c oxidase subunit 3 family. Component of the cytochrome c oxidase (complex IV, CIV), a multisubunit enzyme composed of 14 subunits. The complex is composed of a catalytic core of 3 subunits MT-CO1, MT-CO2 and MT-CO3, encoded in the mitochondrial DNA, and 11 supernumerary subunits COX4I, COX5A, COX5B, COX6A, COX6B, COX6C, COX7A, COX7B, COX7C, COX8 and NDUFA4, which are encoded in the nuclear genome. The complex exists as a monomer or a dimer and forms supercomplexes (SCs) in the inner mitochondrial membrane with NADH-ubiquinone oxidoreductase (complex I, CI) and ubiquinol-cytochrome c oxidoreductase (cytochrome b-c1 complex, complex III, CIII), resulting in different assemblies (supercomplex SCI(1)III(2)IV(1) and megacomplex MCI(2)III(2)IV(2)).

It localises to the mitochondrion inner membrane. It catalyses the reaction 4 Fe(II)-[cytochrome c] + O2 + 8 H(+)(in) = 4 Fe(III)-[cytochrome c] + 2 H2O + 4 H(+)(out). Its function is as follows. Component of the cytochrome c oxidase, the last enzyme in the mitochondrial electron transport chain which drives oxidative phosphorylation. The respiratory chain contains 3 multisubunit complexes succinate dehydrogenase (complex II, CII), ubiquinol-cytochrome c oxidoreductase (cytochrome b-c1 complex, complex III, CIII) and cytochrome c oxidase (complex IV, CIV), that cooperate to transfer electrons derived from NADH and succinate to molecular oxygen, creating an electrochemical gradient over the inner membrane that drives transmembrane transport and the ATP synthase. Cytochrome c oxidase is the component of the respiratory chain that catalyzes the reduction of oxygen to water. Electrons originating from reduced cytochrome c in the intermembrane space (IMS) are transferred via the dinuclear copper A center (CU(A)) of subunit 2 and heme A of subunit 1 to the active site in subunit 1, a binuclear center (BNC) formed by heme A3 and copper B (CU(B)). The BNC reduces molecular oxygen to 2 water molecules using 4 electrons from cytochrome c in the IMS and 4 protons from the mitochondrial matrix. The sequence is that of Cytochrome c oxidase subunit 3 (MT-CO3) from Nanger dama (Dama gazelle).